The chain runs to 219 residues: Cytidylate kinase (219 aa).

Position 21 to 29 (21 to 29 (GPAASGKGT)) interacts with ATP.

Belongs to the cytidylate kinase family. Type 1 subfamily.

Its subcellular location is the cytoplasm. The catalysed reaction is CMP + ATP = CDP + ADP. It carries out the reaction dCMP + ATP = dCDP + ADP. The chain is Cytidylate kinase from Rickettsia felis (strain ATCC VR-1525 / URRWXCal2) (Rickettsia azadi).